The chain runs to 68 residues: Probable tautomerase Cj0270 (68 aa).

Catalysis depends on Pro2, which acts as the Proton acceptor; via imino nitrogen.

The protein belongs to the 4-oxalocrotonate tautomerase family.

The protein is Probable tautomerase Cj0270 of Campylobacter jejuni subsp. jejuni serotype O:2 (strain ATCC 700819 / NCTC 11168).